The sequence spans 851 residues: Meiotically up-regulated gene 87 protein (851 aa).

This sequence belongs to the nucleoporin interacting component (NIC) family.

The protein resides in the nucleus envelope. Has a role in meiosis. The sequence is that of Meiotically up-regulated gene 87 protein (mug87) from Schizosaccharomyces pombe (strain 972 / ATCC 24843) (Fission yeast).